Reading from the N-terminus, the 1004-residue chain is 2-oxoglutarate dehydrogenase E1 component (1004 aa).

The protein belongs to the alpha-ketoglutarate dehydrogenase family. In terms of assembly, homodimer. Part of the 2-oxoglutarate dehydrogenase (OGDH) complex composed of E1 (2-oxoglutarate dehydrogenase), E2 (dihydrolipoamide succinyltransferase) and E3 (dihydrolipoamide dehydrogenase); the complex contains multiple copies of the three enzymatic components (E1, E2 and E3). Thiamine diphosphate is required as a cofactor.

The enzyme catalyses N(6)-[(R)-lipoyl]-L-lysyl-[protein] + 2-oxoglutarate + H(+) = N(6)-[(R)-S(8)-succinyldihydrolipoyl]-L-lysyl-[protein] + CO2. Functionally, E1 component of the 2-oxoglutarate dehydrogenase (OGDH) complex which catalyzes the decarboxylation of 2-oxoglutarate, the first step in the conversion of 2-oxoglutarate to succinyl-CoA and CO(2). The polypeptide is 2-oxoglutarate dehydrogenase E1 component (Brucella abortus (strain S19)).